Consider the following 389-residue polypeptide: Putative F-box protein At3g10240 (389 aa).

The tract at residues 1–26 (MEQQEEKRKIKAYQRKSKRSKSGSSS) is disordered. Residues 9-21 (KIKAYQRKSKRSK) show a composition bias toward basic residues. One can recognise an F-box domain in the interval 21–66 (KSGSSSIPLDLVSEILLRLPEKSVARFRCVSKPWSSITTEPYFINL).

The sequence is that of Putative F-box protein At3g10240 from Arabidopsis thaliana (Mouse-ear cress).